Consider the following 216-residue polypeptide: Pyrophosphatase PpaX (216 aa).

The Nucleophile role is filled by D9.

The protein belongs to the HAD-like hydrolase superfamily. PpaX family. The cofactor is Mg(2+).

It carries out the reaction diphosphate + H2O = 2 phosphate + H(+). In terms of biological role, hydrolyzes pyrophosphate formed during P-Ser-HPr dephosphorylation by HPrK/P. Might play a role in controlling the intracellular pyrophosphate pool. The sequence is that of Pyrophosphatase PpaX from Bacillus cereus (strain ATCC 10987 / NRS 248).